The chain runs to 76 residues: Small ribosomal subunit protein bS18 (76 aa).

The protein belongs to the bacterial ribosomal protein bS18 family. Part of the 30S ribosomal subunit. Forms a tight heterodimer with protein bS6.

In terms of biological role, binds as a heterodimer with protein bS6 to the central domain of the 16S rRNA, where it helps stabilize the platform of the 30S subunit. The polypeptide is Small ribosomal subunit protein bS18 (Nitrosomonas eutropha (strain DSM 101675 / C91 / Nm57)).